The chain runs to 315 residues: Methionyl-tRNA formyltransferase (315 aa).

The tract at residues 2–189 is N-terminal domain; it reads SESLRIIFAG…LITTLKQLAD (188 aa). 113-116 is a (6S)-5,6,7,8-tetrahydrofolate binding site; the sequence is SLLP. The segment at 210–315 is C-terminal domain; sequence KEEARIDWSL…EWFVPGNRLV (106 aa).

It belongs to the Fmt family.

It carries out the reaction L-methionyl-tRNA(fMet) + (6R)-10-formyltetrahydrofolate = N-formyl-L-methionyl-tRNA(fMet) + (6S)-5,6,7,8-tetrahydrofolate + H(+). Functionally, attaches a formyl group to the free amino group of methionyl-tRNA(fMet). The formyl group appears to play a dual role in the initiator identity of N-formylmethionyl-tRNA by promoting its recognition by IF2 and preventing the misappropriation of this tRNA by the elongation apparatus. This Escherichia coli O157:H7 protein is Methionyl-tRNA formyltransferase.